Reading from the N-terminus, the 447-residue chain is Probable glycine dehydrogenase (decarboxylating) subunit 1 (447 aa).

It belongs to the GcvP family. N-terminal subunit subfamily. In terms of assembly, the glycine cleavage system is composed of four proteins: P, T, L and H. In this organism, the P 'protein' is a heterodimer of two subunits.

The enzyme catalyses N(6)-[(R)-lipoyl]-L-lysyl-[glycine-cleavage complex H protein] + glycine + H(+) = N(6)-[(R)-S(8)-aminomethyldihydrolipoyl]-L-lysyl-[glycine-cleavage complex H protein] + CO2. In terms of biological role, the glycine cleavage system catalyzes the degradation of glycine. The P protein binds the alpha-amino group of glycine through its pyridoxal phosphate cofactor; CO(2) is released and the remaining methylamine moiety is then transferred to the lipoamide cofactor of the H protein. This chain is Probable glycine dehydrogenase (decarboxylating) subunit 1, found in Sulfolobus acidocaldarius (strain ATCC 33909 / DSM 639 / JCM 8929 / NBRC 15157 / NCIMB 11770).